A 431-amino-acid polypeptide reads, in one-letter code: Na(+)-translocating NADH-quinone reductase subunit F (431 aa).

A helical membrane pass occupies residues 10–30; sequence ISIASLVFCVIGLILSGIILI. In terms of domain architecture, 2Fe-2S ferredoxin-type spans 41–133; that stretch reads CKLKINDDDS…DMCLEIEERY (93 aa). Positions 76, 82, 85, and 117 each coordinate [2Fe-2S] cluster. The region spanning 136-286 is the FAD-binding FR-type domain; it reads ASSWEGTVVS…SGPYGESFMK (151 aa).

It belongs to the NqrF family. As to quaternary structure, composed of six subunits; NqrA, NqrB, NqrC, NqrD, NqrE and NqrF. It depends on [2Fe-2S] cluster as a cofactor. FAD serves as cofactor.

It is found in the cell inner membrane. The catalysed reaction is a ubiquinone + n Na(+)(in) + NADH + H(+) = a ubiquinol + n Na(+)(out) + NAD(+). Functionally, NQR complex catalyzes the reduction of ubiquinone-1 to ubiquinol by two successive reactions, coupled with the transport of Na(+) ions from the cytoplasm to the periplasm. The first step is catalyzed by NqrF, which accepts electrons from NADH and reduces ubiquinone-1 to ubisemiquinone by a one-electron transfer pathway. This Chlamydia caviae (strain ATCC VR-813 / DSM 19441 / 03DC25 / GPIC) (Chlamydophila caviae) protein is Na(+)-translocating NADH-quinone reductase subunit F.